The sequence spans 573 residues: NADP-dependent malic enzyme, chloroplastic (573 aa).

Tyr-123 acts as the Proton donor in catalysis. Arg-176 is a binding site for NAD(+). The active-site Proton acceptor is the Lys-194. Residues Glu-265, Asp-266, and Asp-289 each coordinate a divalent metal cation. Asp-289 contributes to the NAD(+) binding site. NADP(+) is bound at residue 318–334 (LFLGAGEAGTGIAELIA). Residue Asn-430 coordinates NAD(+).

This sequence belongs to the malic enzymes family. Homotetramer. Mg(2+) is required as a cofactor. The cofactor is Mn(2+).

The protein resides in the plastid. It is found in the chloroplast. The enzyme catalyses (S)-malate + NADP(+) = pyruvate + CO2 + NADPH. It catalyses the reaction oxaloacetate + H(+) = pyruvate + CO2. It functions in the pathway photosynthesis; C4 acid pathway. Its function is as follows. The chloroplastic ME isoform decarboxylates malate shuttled from neighboring mesophyll cells. The CO(2) released is then refixed by ribulose-bisphosphate carboxylase. This pathway eliminates the photorespiratory loss of CO(2) that occurs in most plants. The protein is NADP-dependent malic enzyme, chloroplastic of Solanum lycopersicum (Tomato).